We begin with the raw amino-acid sequence, 212 residues long: Peptide methionine sulfoxide reductase MsrA (212 aa).

The active site involves cysteine 52.

The protein belongs to the MsrA Met sulfoxide reductase family.

The catalysed reaction is L-methionyl-[protein] + [thioredoxin]-disulfide + H2O = L-methionyl-(S)-S-oxide-[protein] + [thioredoxin]-dithiol. It carries out the reaction [thioredoxin]-disulfide + L-methionine + H2O = L-methionine (S)-S-oxide + [thioredoxin]-dithiol. Its function is as follows. Has an important function as a repair enzyme for proteins that have been inactivated by oxidation. Catalyzes the reversible oxidation-reduction of methionine sulfoxide in proteins to methionine. The protein is Peptide methionine sulfoxide reductase MsrA of Escherichia coli O17:K52:H18 (strain UMN026 / ExPEC).